Reading from the N-terminus, the 478-residue chain is RNA exonuclease 3 (478 aa).

The 146-residue stretch at 320–465 folds into the Exonuclease domain; it reads VLALDCEMAF…EDAIAAMDVI (146 aa).

Belongs to the REXO1/REXO3 family.

The protein localises to the cytoplasm. It localises to the nucleus. Functionally, 3' to 5' exoribonuclease required for proper 3' end maturation of MRP RNA and of the U5L snRNA. This is RNA exonuclease 3 (REX3) from Kluyveromyces lactis (strain ATCC 8585 / CBS 2359 / DSM 70799 / NBRC 1267 / NRRL Y-1140 / WM37) (Yeast).